The primary structure comprises 657 residues: MSKIIELPDILANQIAAGEVVERPSSVVKELVENAIDAGSSQITIEVEESGLKKIQITDNGEGMTSEDAVLSLRRHATSKIKSQSDLFRIRTLGFRGEALPSIASISLMTIKTATEQGKQGTLLVAKGGNIEKQEVVSSPRGTKILVENLFFNTPARLKYMKSLQSELAHIIDIVNRLSLAHPEVAFTLINDGKEMTKTSGTGDLRQAIAGIYGLNTAKKMIEISNADLDFEISGYVSLPELTRANRNYITLLINGRYIKNFLLNRSILDGYGSKLMVGRFPIAVIDIQIDPYLADVNVHPTKQEVRISKERELMSLISSAISESLKQYDLIPDALENLAKTSTRSVDKPIQTSFSLKQPGLYYDRTKNDFFIDADTVSEPIANFTNLDKSDGSVDNDVKNSVNQGATQSPNIKYASRDQADSENFIHSQDYLSSKQSLNKLVEKLDSEESSTFPELEFFGQMHGTYLFAQGNGGLYIIDQHAAQERVKYEYYREKIGEVDNSLQQLLVPFLFEFSSSDFLQLQEKMSLLQDVGIFLEPYGNNTFILREHPIWMKEEEVESGVYEMCDMLLLTNEVSVKKYRAELAIMMSCKRSIKANHTLDDYSARHLLDQLAQCKNPYNCPHGRPVLVNFTKADMEKMFKRIQENHTSLRDLGKY.

Belongs to the DNA mismatch repair MutL/HexB family.

This protein is involved in the repair of mismatches in DNA. It is required for dam-dependent methyl-directed DNA mismatch repair. May act as a 'molecular matchmaker', a protein that promotes the formation of a stable complex between two or more DNA-binding proteins in an ATP-dependent manner without itself being part of a final effector complex. This Streptococcus agalactiae serotype Ia (strain ATCC 27591 / A909 / CDC SS700) protein is DNA mismatch repair protein MutL.